A 377-amino-acid chain; its full sequence is tRNA-specific 2-thiouridylase MnmA (377 aa).

ATP contacts are provided by residues 18–25 (GMSGGVDS) and Met44. Residues 104 to 106 (NPD) form an interaction with target base in tRNA region. The active-site Nucleophile is the Cys109. An intrachain disulfide couples Cys109 to Cys209. Gly134 serves as a coordination point for ATP. The tract at residues 159-161 (KDQ) is interaction with tRNA. Catalysis depends on Cys209, which acts as the Cysteine persulfide intermediate. The tract at residues 324–325 (RY) is interaction with tRNA.

It belongs to the MnmA/TRMU family.

Its subcellular location is the cytoplasm. It carries out the reaction S-sulfanyl-L-cysteinyl-[protein] + uridine(34) in tRNA + AH2 + ATP = 2-thiouridine(34) in tRNA + L-cysteinyl-[protein] + A + AMP + diphosphate + H(+). Functionally, catalyzes the 2-thiolation of uridine at the wobble position (U34) of tRNA, leading to the formation of s(2)U34. This Photobacterium profundum (strain SS9) protein is tRNA-specific 2-thiouridylase MnmA.